The following is a 153-amino-acid chain: Ribonuclease K6 (153 aa).

The N-terminal stretch at 1–27 is a signal peptide; the sequence is MVVDLPRYLPLLLLLELWEPMYLLCSQ. Catalysis depends on histidine 41, which acts as the Proton acceptor. Cystine bridges form between cysteine 49–cysteine 107, cysteine 63–cysteine 117, cysteine 81–cysteine 132, and cysteine 88–cysteine 95. An N-linked (GlcNAc...) asparagine glycan is attached at asparagine 58. 64 to 68 contributes to the substrate binding site; it reads KQINT. Asparagine 85 carries N-linked (GlcNAc...) asparagine glycosylation. Residue lysine 89 participates in substrate binding. Histidine 148 (proton donor) is an active-site residue.

This sequence belongs to the pancreatic ribonuclease family. Interacts (via N-terminus) with bacterial lipopolysaccharide (LPS). In terms of tissue distribution, highly expressed in spleen (at protein level). Has little or no expression in healthy kidneys (at protein level). Detected at high levels in infected kidneys (at protein level). Expressed at low levels in bladder. Also detected in skeletal muscle, heart and bone marrow.

The protein localises to the secreted. Its subcellular location is the lysosome. It localises to the cytoplasmic granule. In terms of biological role, ribonuclease which shows a preference for the pyrimidines uridine and cytosine. Has potent antibacterial activity against a range of Gram-positive and Gram-negative bacteria, including P.aeruginosa, A.baumanii, M.luteus, S.aureus, E.faecalis, E.faecium, S.saprophyticus and E.coli. Causes loss of bacterial membrane integrity, and also promotes agglutination of Gram-negative bacteria. Probably contributes to urinary tract sterility. Bactericidal activity is independent of RNase activity. This Mus musculus (Mouse) protein is Ribonuclease K6 (Rnase6).